Here is a 419-residue protein sequence, read N- to C-terminus: G protein-activated inward rectifier potassium channel 4 (419 aa).

At 1-86 (MAGDSRNAMN…LFTTLVDLKW (86 aa)) the chain is on the cytoplasmic side. S5 carries the phosphoserine modification. Residues 87–111 (RFNLLVFTMVYTVTWLFFGFIWWLI) form a helical membrane-spanning segment. Topologically, residues 112–135 (AYIRGDLDHVGDQEWIPCVENLSG) are extracellular. An intramembrane region (helical; Pore-forming) is located at residues 136–147 (FVSAFLFSIETE). The pore-forming intramembrane region spans 148-154 (TTIGYGF). Positions 149–154 (TIGYGF) match the Selectivity filter motif. At 155 to 163 (RVITEKCPE) the chain is on the extracellular side. Residues 164–185 (GIILLLVQAILGSIVNAFMVGC) form a helical membrane-spanning segment. Over 186-419 (MFVKISQPKK…GGSREARGSV (234 aa)) the chain is Cytoplasmic. A disordered region spans residues 390–419 (AEAGLDAEAEQNEEDEPKGLGGSREARGSV). Positions 394–405 (LDAEAEQNEEDE) are enriched in acidic residues.

It belongs to the inward rectifier-type potassium channel (TC 1.A.2.1) family. KCNJ5 subfamily. As to quaternary structure, associates with KCNJ3/GIRK1 to form a G-protein-activated heteromultimer pore-forming unit. The resulting inward current is much larger. Associates with KCNJ6/GIRK2 to form a G-protein-activated heteromultimer pore-forming unit. As to expression, islets, exocrine pancreas and heart. Expressed in the adrenal cortex, particularly the zona glomerulosa.

It localises to the membrane. It carries out the reaction K(+)(in) = K(+)(out). With respect to regulation, heteromultimer composed of KCNJ3/GIRK1 and KCNJ5/GIRK4 is activated by phosphatidylinositol 4,5 biphosphate (PtdIns(4,5)P2). Inward rectifier potassium channels are characterized by a greater tendency to allow potassium to flow into the cell rather than out of it. Their voltage dependence is regulated by the concentration of extracellular potassium; as external potassium is raised, the voltage range of the channel opening shifts to more positive voltages. The inward rectification is mainly due to the blockage of outward current by internal magnesium. Can be blocked by external barium. This potassium channel is controlled by G proteins. This Homo sapiens (Human) protein is G protein-activated inward rectifier potassium channel 4 (KCNJ5).